We begin with the raw amino-acid sequence, 334 residues long: MIKIAVAGGVTGGHLYPALATLNELQKITPIDVLYFTVKGKLEEKVLKDYNFKTVSLDVKGLIRPLYSFGNIKRILKILNAKNIVKKALKDFKPDIAFVTGGYVSYPVGVTAKQLGFLLYIHEQNVIPGLTNLKLSKIADKVFVSFESSKKYFEREVFVSGNPIFIHQKKLLNFDKKTVLIIGGSGGSEFLNELACKLAKKMKDLQFILSTGGKNIKCLEENLRAIDYIENMADYYQSVNCAITRGGATTVSELLYFQVPSIVIPWEGATESHQIENAKEIEKGNLGFVVREKDLDLNNLIDKIKILSSRERKIIKKENPATIIAKEIAKEVLK.

Residues 11–13 (TGG), N125, S185, I229, and Q274 contribute to the UDP-N-acetyl-alpha-D-glucosamine site.

The protein belongs to the glycosyltransferase 28 family. MurG subfamily.

It localises to the cell inner membrane. It carries out the reaction di-trans,octa-cis-undecaprenyl diphospho-N-acetyl-alpha-D-muramoyl-L-alanyl-D-glutamyl-meso-2,6-diaminopimeloyl-D-alanyl-D-alanine + UDP-N-acetyl-alpha-D-glucosamine = di-trans,octa-cis-undecaprenyl diphospho-[N-acetyl-alpha-D-glucosaminyl-(1-&gt;4)]-N-acetyl-alpha-D-muramoyl-L-alanyl-D-glutamyl-meso-2,6-diaminopimeloyl-D-alanyl-D-alanine + UDP + H(+). Its pathway is cell wall biogenesis; peptidoglycan biosynthesis. Functionally, cell wall formation. Catalyzes the transfer of a GlcNAc subunit on undecaprenyl-pyrophosphoryl-MurNAc-pentapeptide (lipid intermediate I) to form undecaprenyl-pyrophosphoryl-MurNAc-(pentapeptide)GlcNAc (lipid intermediate II). The sequence is that of UDP-N-acetylglucosamine--N-acetylmuramyl-(pentapeptide) pyrophosphoryl-undecaprenol N-acetylglucosamine transferase from Thermosipho melanesiensis (strain DSM 12029 / CIP 104789 / BI429).